A 279-amino-acid chain; its full sequence is Nitrogenase vanadium-iron protein alpha chain (279 aa).

[8Fe-7S] cluster-binding residues include cysteine 5, cysteine 31, and cysteine 94. Cysteine 213 provides a ligand contact to [7Fe-V-9S-C-homocitryl] cluster.

Belongs to the NifD/NifK/NifE/NifN family. In terms of assembly, hexamer of two alpha, two beta, and two delta chains. It depends on [8Fe-7S] cluster as a cofactor. [7Fe-V-9S-C-homocitryl] cluster serves as cofactor.

It catalyses the reaction N2 + 8 reduced [2Fe-2S]-[ferredoxin] + 16 ATP + 16 H2O = H2 + 8 oxidized [2Fe-2S]-[ferredoxin] + 2 NH4(+) + 16 ADP + 16 phosphate + 6 H(+). Functionally, this vanadium-iron protein is part of the nitrogenase complex that catalyzes the key enzymatic reactions in nitrogen fixation. This Azotobacter salinestris protein is Nitrogenase vanadium-iron protein alpha chain (vnfD).